Consider the following 976-residue polypeptide: Peptidylglycine alpha-amidating monooxygenase (976 aa).

A signal peptide spans 1–25; sequence MAGRARSGLLLLLLGLLALQSSCLA. The peptidylglycine alpha-hydroxylating monooxygenase stretch occupies residues 1–497; the sequence is MAGRARSGLL…EGPWEPEPSG (497 aa). Positions 26–35 are excised as a propeptide; it reads FRSPLSVFKR. Residues 36-866 are Intragranular-facing; it reads FKETTRSFSN…QKLSTEPGSG (831 aa). Intrachain disulfides connect Cys-47/Cys-186, Cys-81/Cys-126, Cys-114/Cys-131, Cys-227/Cys-334, and Cys-293/Cys-315. Cu(2+) is bound by residues His-107 and His-108. Cu(2+) contacts are provided by His-172, His-242, His-244, and Met-314. The tract at residues 498 to 820 is peptidyl-alpha-hydroxyglycine alpha-amidating lyase; that stretch reads DFHVEEELDW…LTEKMEHRSV (323 aa). NHL repeat units lie at residues 501-544, 570-611, 620-665, and 673-717; these read VEEE…NSFD, AEIL…LDPH, LGRS…FSPS, and GEES…FKTD. Residue Val-520 participates in Ca(2+) binding. Arg-533 contributes to the a protein binding site. His-585 serves as a coordination point for Zn(2+). Leu-587 contacts Ca(2+). Cys-634 and Cys-655 form a disulfide bridge. Tyr-654 is an a protein binding site. Zn(2+) is bound at residue His-690. The cysteines at positions 702 and 713 are disulfide-linked. An a protein-binding site is contributed by Arg-706. A glycan (N-linked (GlcNAc...) asparagine) is linked at Asn-765. An NHL 5 repeat occupies 769-812; sequence GEIIDVFKPVRKHFDMPHDIVASEDGTVYIGDAHTNTVWKFTLT. A Sulfotyrosine modification is found at Val-774. His-786 serves as a coordination point for Zn(2+). A Ca(2+)-binding site is contributed by Asp-787. Residue Glu-792 is modified to Sulfotyrosine. A helical membrane pass occupies residues 867-890; the sequence is VSVVLITTLLVIPVLVLLAIVMFI. Over 891-976 the chain is Cytoplasmic; the sequence is RWKKSRAFGD…APLPKPAPSS (86 aa). Ser-921, Ser-932, and Ser-945 each carry phosphoserine. Residues 928–945 are interaction with RASSF9; the sequence is NFFASRKGYSRKGFDRVS. Residues 940–976 are disordered; it reads GFDRVSTEGSDQEKDEDDGTESEEEYSAPLPKPAPSS. Thr-946 carries the post-translational modification Phosphothreonine. Position 949 is a phosphoserine (Ser-949). Residues 952–965 show a composition bias toward acidic residues; sequence EKDEDDGTESEEEY. The residue at position 959 (Thr-959) is a Phosphothreonine. The residue at position 961 (Ser-961) is a Phosphoserine.

This sequence in the C-terminal section; belongs to the peptidyl-alpha-hydroxyglycine alpha-amidating lyase family. The protein in the N-terminal section; belongs to the copper type II ascorbate-dependent monooxygenase family. In terms of assembly, monomer. Interacts with RASSF9. Requires Zn(2+) as cofactor. It depends on Cu(2+) as a cofactor.

It is found in the cytoplasmic vesicle. The protein resides in the secretory vesicle membrane. The protein localises to the membrane. Its subcellular location is the secreted. It carries out the reaction a [peptide]-C-terminal glycine + 2 L-ascorbate + O2 = a [peptide]-C-terminal (2S)-2-hydroxyglycine + 2 monodehydro-L-ascorbate radical + H2O. It catalyses the reaction a [peptide]-C-terminal (2S)-2-hydroxyglycine = a [peptide]-C-terminal amide + glyoxylate. The catalysed reaction is N-dodecanoylglycine + 2 L-ascorbate + O2 = N-dodecanoyl-(2S)-hydroxyglycine + 2 monodehydro-L-ascorbate radical + H2O. The enzyme catalyses N-dodecanoyl-(2S)-hydroxyglycine = dodecanamide + glyoxylate. It carries out the reaction N-(9Z,12Z,15Z)-octadecatrienoylglycine + 2 L-ascorbate + O2 = N-(9Z,12Z,15Z)-octadecatrienoyl-(2S)-hydroxyglycine + 2 monodehydro-L-ascorbate radical + H2O. It catalyses the reaction N-(9Z,12Z,15Z)-octadecatrienoyl-(2S)-hydroxyglycine = (9Z,12Z,15Z)-octadecatrienamide + glyoxylate. The catalysed reaction is N-(9Z-octadecenoyl)glycine + 2 L-ascorbate + O2 = N-(9Z-octadecenoyl)-(2S)-hydroxyglycine + 2 monodehydro-L-ascorbate radical + H2O. The enzyme catalyses N-(9Z-octadecenoyl)-(2S)-hydroxyglycine = (9Z)-octadecenamide + glyoxylate. It carries out the reaction N-tetradecanoylglycine + 2 L-ascorbate + O2 = N-tetradecanoyl-(2S)-hydroxyglycine + 2 monodehydro-L-ascorbate radical + H2O. It catalyses the reaction N-tetradecanoyl-(2S)-hydroxyglycine = tetradecamide + glyoxylate. The catalysed reaction is N-decanoylglycine + 2 L-ascorbate + O2 = N-decanoyl-(2S)-hydroxyglycine + 2 monodehydro-L-ascorbate radical + H2O. The enzyme catalyses N-decanoyl-(2S)-hydroxyglycine = decanamide + glyoxylate. It carries out the reaction N-octanoylglycine + 2 L-ascorbate + O2 = N-octanoyl-(2S)-hydroxyglycine + 2 monodehydro-L-ascorbate radical + H2O. It catalyses the reaction N-octanoyl-(2S)-hydroxyglycine = octanamide + glyoxylate. With respect to regulation, PAM activity is inhibited by EDTA, phenylglyoxal and diethyl pyrocarbonate. PAL activity is stimulated by cadmium and inhibited by mercury. Functionally, bifunctional enzyme that catalyzes amidation of the C-terminus of proteins. Alpha-amidation is present at the C-terminus of many endocrine hormones and neuropeptides and is required for their activity. C-terminal amidation also takes place in response to protein fragmentation triggered by oxidative stress, promoting degradation of amidated protein fragments by the proteasome. Alpha-amidation involves two sequential reactions, both of which are catalyzed by separate catalytic domains of the enzyme. The first step, catalyzed by peptidyl alpha-hydroxylating monooxygenase (PHM) domain, is the copper-, ascorbate-, and O2- dependent stereospecific hydroxylation (with S stereochemistry) at the alpha-carbon (C-alpha) of the C-terminal glycine of the peptidylglycine substrate. The second step, catalyzed by the peptidylglycine amidoglycolate lyase (PAL) domain, is the zinc-dependent cleavage of the N-C-alpha bond, producing the alpha-amidated peptide and glyoxylate. Similarly, catalyzes the two-step conversion of an N-fatty acylglycine to a primary fatty acid amide and glyoxylate. The protein is Peptidylglycine alpha-amidating monooxygenase of Rattus norvegicus (Rat).